Reading from the N-terminus, the 110-residue chain is ORC1-type DNA replication protein 3 (110 aa).

8–12 provides a ligand contact to ATP; it reads SGKSL.

It belongs to the CDC6/cdc18 family.

Functionally, involved in regulation of DNA replication. This is ORC1-type DNA replication protein 3 (orc3) from Halobacterium salinarum (strain ATCC 700922 / JCM 11081 / NRC-1) (Halobacterium halobium).